Here is a 254-residue protein sequence, read N- to C-terminus: Urease accessory protein UreD (254 aa).

It belongs to the UreD family. As to quaternary structure, ureD, UreF and UreG form a complex that acts as a GTP-hydrolysis-dependent molecular chaperone, activating the urease apoprotein by helping to assemble the nickel containing metallocenter of UreC. The UreE protein probably delivers the nickel.

Its subcellular location is the cytoplasm. In terms of biological role, required for maturation of urease via the functional incorporation of the urease nickel metallocenter. This chain is Urease accessory protein UreD, found in Streptomyces coelicolor (strain ATCC BAA-471 / A3(2) / M145).